The sequence spans 450 residues: Phosphoglucosamine mutase (450 aa).

Residue Ser101 is the Phosphoserine intermediate of the active site. The Mg(2+) site is built by Ser101, Asp240, Asp242, and Asp244. Ser101 carries the phosphoserine modification.

This sequence belongs to the phosphohexose mutase family. Mg(2+) serves as cofactor. Post-translationally, activated by phosphorylation.

The enzyme catalyses alpha-D-glucosamine 1-phosphate = D-glucosamine 6-phosphate. Its function is as follows. Catalyzes the conversion of glucosamine-6-phosphate to glucosamine-1-phosphate. This Streptococcus uberis (strain ATCC BAA-854 / 0140J) protein is Phosphoglucosamine mutase.